A 588-amino-acid polypeptide reads, in one-letter code: 2-isopropylmalate synthase (588 aa).

The Pyruvate carboxyltransferase domain maps to 40-314 (PRWCAVDLRD…DPQIDFSDLD (275 aa)). The Mg(2+) site is built by Asp-49, His-253, His-255, and Asn-289. Residues 456 to 588 (APLDRVEEKW…TVREPELAAV (133 aa)) form a regulatory domain region.

The protein belongs to the alpha-IPM synthase/homocitrate synthase family. LeuA type 2 subfamily. Homodimer. Requires Mg(2+) as cofactor.

The protein resides in the cytoplasm. It catalyses the reaction 3-methyl-2-oxobutanoate + acetyl-CoA + H2O = (2S)-2-isopropylmalate + CoA + H(+). The protein operates within amino-acid biosynthesis; L-leucine biosynthesis; L-leucine from 3-methyl-2-oxobutanoate: step 1/4. Its function is as follows. Catalyzes the condensation of the acetyl group of acetyl-CoA with 3-methyl-2-oxobutanoate (2-ketoisovalerate) to form 3-carboxy-3-hydroxy-4-methylpentanoate (2-isopropylmalate). This Clavibacter michiganensis subsp. michiganensis (strain NCPPB 382) protein is 2-isopropylmalate synthase.